We begin with the raw amino-acid sequence, 574 residues long: DNA polymerase I (574 aa).

Positions 4–161 constitute a 3'-5' exonuclease domain; sequence EYVTGEEGLK…ELFPKMRDML (158 aa).

It belongs to the DNA polymerase type-A family.

The catalysed reaction is DNA(n) + a 2'-deoxyribonucleoside 5'-triphosphate = DNA(n+1) + diphosphate. The polypeptide is DNA polymerase I (polA) (Aquifex aeolicus (strain VF5)).